A 1887-amino-acid chain; its full sequence is Protein TIC 214 (1887 aa).

The next 6 helical transmembrane spans lie at 18 to 38 (IINS…FSIG), 64 to 84 (FITG…HLAL), 87 to 107 (PHTI…WNNH), 124 to 144 (LSIQ…HFIL), 172 to 192 (VGWL…LVWI), and 221 to 241 (IFSI…PSPI). Disordered stretches follow at residues 248 to 300 (EASK…EGWD), 785 to 805 (REEQ…DNKR), and 1569 to 1603 (LPSN…NLSP). Over residues 256 to 268 (VESEEERDVEIET) the composition is skewed to acidic residues. The segment covering 1578 to 1597 (RSQETKEPPSQRERGSDIEN) has biased composition (basic and acidic residues).

Belongs to the TIC214 family. Part of the Tic complex.

It is found in the plastid. The protein localises to the chloroplast inner membrane. In terms of biological role, involved in protein precursor import into chloroplasts. May be part of an intermediate translocation complex acting as a protein-conducting channel at the inner envelope. This chain is Protein TIC 214, found in Solanum tuberosum (Potato).